Reading from the N-terminus, the 463-residue chain is Elongation factor 1-alpha (463 aa).

In terms of domain architecture, tr-type G spans 8 to 245 (KTHLNIVIIG…DALVPPVRPA (238 aa)). A G1 region spans residues 17–24 (GHVDSGKS). Position 17–24 (17–24 (GHVDSGKS)) interacts with GTP. Residues 73–77 (GITID) form a G2 region. Residues 94–97 (DAPG) are G3. Residues 94–98 (DAPGH) and 156–159 (NKMD) contribute to the GTP site. A G4 region spans residues 156-159 (NKMD). The G5 stretch occupies residues 197–199 (SGW).

The protein belongs to the TRAFAC class translation factor GTPase superfamily. Classic translation factor GTPase family. EF-Tu/EF-1A subfamily. The 42S RNP particle comprises four subunits each of which contains one molecule of 5S RNA, three molecules of tRNA, two molecules of EF1-alpha and one molecule of the 5S RNA binding protein 43.

It is found in the cytoplasm. Functionally, this protein is one of two protein components of a 42S RNP particle that is very abundant in previtellogenic oocytes. A major function served by 42sp50 appears to be the storage of tRNAs for later use in oogenesis and early embryogenesis. Purified 42S particles can directly transfer aminoacyl tRNA to ribosomes. The chain is Elongation factor 1-alpha from Xenopus laevis (African clawed frog).